The sequence spans 709 residues: Polyribonucleotide nucleotidyltransferase (709 aa).

Residues Asp487 and Asp493 each coordinate Mg(2+). A KH domain is found at 554–613 (PRIHTMKISSDKIKDVIGKGGAVIRALCEETGTTIEIEDDGTIKIAATEGAAAKEAIRRI). The 69-residue stretch at 623-691 (GKIYTGKVMR…RQGRIRLSIK (69 aa)) folds into the S1 motif domain.

This sequence belongs to the polyribonucleotide nucleotidyltransferase family. Component of the RNA degradosome, which is a multiprotein complex involved in RNA processing and mRNA degradation. It depends on Mg(2+) as a cofactor.

It is found in the cytoplasm. The catalysed reaction is RNA(n+1) + phosphate = RNA(n) + a ribonucleoside 5'-diphosphate. Functionally, involved in mRNA degradation. Catalyzes the phosphorolysis of single-stranded polyribonucleotides processively in the 3'- to 5'-direction. The polypeptide is Polyribonucleotide nucleotidyltransferase (Aliivibrio fischeri (strain MJ11) (Vibrio fischeri)).